A 426-amino-acid polypeptide reads, in one-letter code: Metacaspase-1B (426 aa).

Positions 1 to 14 (MSGYPGAGYNGGGY) are enriched in gly residues. The disordered stretch occupies residues 1 to 111 (MSGYPGAGYN…QAPPPPPQAP (111 aa)). Residues 21–68 (QYGGYYPPQPAYNAYQQPPPQQQQYMVYHQPSPGPQQHQHWNPQQQTP) show a composition bias toward low complexity. Active-site residues include His-217 and Cys-273.

The protein belongs to the peptidase C14B family.

Functionally, involved in cell death (apoptosis). This is Metacaspase-1B (casB) from Neurospora crassa (strain ATCC 24698 / 74-OR23-1A / CBS 708.71 / DSM 1257 / FGSC 987).